We begin with the raw amino-acid sequence, 126 residues long: Ribosome-binding factor A (126 aa).

It belongs to the RbfA family. In terms of assembly, monomer. Binds 30S ribosomal subunits, but not 50S ribosomal subunits or 70S ribosomes.

The protein resides in the cytoplasm. In terms of biological role, one of several proteins that assist in the late maturation steps of the functional core of the 30S ribosomal subunit. Associates with free 30S ribosomal subunits (but not with 30S subunits that are part of 70S ribosomes or polysomes). Required for efficient processing of 16S rRNA. May interact with the 5'-terminal helix region of 16S rRNA. This chain is Ribosome-binding factor A, found in Azoarcus sp. (strain BH72).